The sequence spans 142 residues: Myosin-2 essential light chain (142 aa).

EF-hand domains follow at residues 2 to 37 (DDLA…LGQN) and 75 to 110 (HTVE…LGER).

In terms of assembly, myosin is a hexamer of 2 heavy chains and 4 light chains (two regulatory light chains and two essential light chains).

It localises to the cytoplasm. The protein resides in the cytoskeleton. Functionally, required for cytokinesis and embryo elongation. May regulate myosin II complex formation and/or the association of myosin with actin. May be involved in the organization of mlc-4 and nmy-2 into bundles. This is Myosin-2 essential light chain from Caenorhabditis elegans.